The sequence spans 141 residues: Hemoglobin subunit alpha (141 aa).

Residues 1-141 (VLSPADKTNV…VSTVLTSKYR (141 aa)) form the Globin domain. Ser3 carries the post-translational modification Phosphoserine. N6-succinyllysine is present on Lys7. Residue Thr8 is modified to Phosphothreonine. Residue Lys11 is modified to N6-succinyllysine. N6-acetyllysine; alternate is present on Lys16. Lys16 bears the N6-succinyllysine; alternate mark. Ser35 bears the Phosphoserine mark. Lys40 bears the N6-succinyllysine mark. Residue His58 participates in O2 binding. His87 provides a ligand contact to heme b. Ser102 is subject to Phosphoserine. Thr108 is subject to Phosphothreonine. Phosphoserine is present on residues Ser124 and Ser131. Residues Thr134 and Thr137 each carry the phosphothreonine modification. Ser138 is subject to Phosphoserine.

Belongs to the globin family. In terms of assembly, heterotetramer of two alpha chains and two beta chains. As to expression, red blood cells.

Involved in oxygen transport from the lung to the various peripheral tissues. In terms of biological role, hemopressin acts as an antagonist peptide of the cannabinoid receptor CNR1. Hemopressin-binding efficiently blocks cannabinoid receptor CNR1 and subsequent signaling. The sequence is that of Hemoglobin subunit alpha (HBA) from Physeter macrocephalus (Sperm whale).